Consider the following 202-residue polypeptide: Superoxide dismutase [Mn/Fe] (202 aa).

Positions 26, 80, 163, and 167 each coordinate Fe(3+). 4 residues coordinate Mn(2+): H26, H80, D163, and H167.

This sequence belongs to the iron/manganese superoxide dismutase family. Homodimer. Mn(2+) serves as cofactor. It depends on Fe(3+) as a cofactor.

The enzyme catalyses 2 superoxide + 2 H(+) = H2O2 + O2. Its function is as follows. Destroys superoxide anion radicals which are normally produced within the cells and which are toxic to biological systems. Catalyzes the dismutation of superoxide anion radicals into O2 and H2O2 by successive reduction and oxidation of the transition metal ion at the active site. The protein is Superoxide dismutase [Mn/Fe] (sodB) of Methylomonas sp. (strain J).